The sequence spans 47 residues: Protein YpaB (47 aa).

This chain is Protein YpaB (ypaB), found in Escherichia coli (strain K12).